The sequence spans 278 residues: Orotidine 5'-phosphate decarboxylase (278 aa).

K95 functions as the Proton donor in the catalytic mechanism.

The protein belongs to the OMP decarboxylase family. Type 2 subfamily.

It carries out the reaction orotidine 5'-phosphate + H(+) = UMP + CO2. It functions in the pathway pyrimidine metabolism; UMP biosynthesis via de novo pathway; UMP from orotate: step 2/2. This Mycobacterium ulcerans (strain Agy99) protein is Orotidine 5'-phosphate decarboxylase.